Reading from the N-terminus, the 388-residue chain is Succinate--CoA ligase [ADP-forming] subunit beta (388 aa).

The 236-residue stretch at 9–244 (KQLFAEYGLP…PSQDDPREAH (236 aa)) folds into the ATP-grasp domain. Residues K46, 53 to 55 (GRG), E99, T102, and E107 each bind ATP. Positions 199 and 213 each coordinate Mg(2+). Residues N264 and 321-323 (GIV) each bind substrate.

It belongs to the succinate/malate CoA ligase beta subunit family. As to quaternary structure, heterotetramer of two alpha and two beta subunits. Mg(2+) is required as a cofactor.

The catalysed reaction is succinate + ATP + CoA = succinyl-CoA + ADP + phosphate. The enzyme catalyses GTP + succinate + CoA = succinyl-CoA + GDP + phosphate. The protein operates within carbohydrate metabolism; tricarboxylic acid cycle; succinate from succinyl-CoA (ligase route): step 1/1. In terms of biological role, succinyl-CoA synthetase functions in the citric acid cycle (TCA), coupling the hydrolysis of succinyl-CoA to the synthesis of either ATP or GTP and thus represents the only step of substrate-level phosphorylation in the TCA. The beta subunit provides nucleotide specificity of the enzyme and binds the substrate succinate, while the binding sites for coenzyme A and phosphate are found in the alpha subunit. This is Succinate--CoA ligase [ADP-forming] subunit beta from Ectopseudomonas mendocina (strain ymp) (Pseudomonas mendocina).